The following is a 337-amino-acid chain: Anthranilate phosphoribosyltransferase (337 aa).

5-phospho-alpha-D-ribose 1-diphosphate-binding positions include Gly82, 85 to 86 (GD), Thr90, 92 to 95 (NIST), 110 to 118 (KHGGRSVSS), and Ser122. Gly82 contributes to the anthranilate binding site. A Mg(2+)-binding site is contributed by Ser94. Arg168 is an anthranilate binding site. Mg(2+) contacts are provided by Asp226 and Glu227.

The protein belongs to the anthranilate phosphoribosyltransferase family. Homodimer. It depends on Mg(2+) as a cofactor.

It carries out the reaction N-(5-phospho-beta-D-ribosyl)anthranilate + diphosphate = 5-phospho-alpha-D-ribose 1-diphosphate + anthranilate. The protein operates within amino-acid biosynthesis; L-tryptophan biosynthesis; L-tryptophan from chorismate: step 2/5. Catalyzes the transfer of the phosphoribosyl group of 5-phosphorylribose-1-pyrophosphate (PRPP) to anthranilate to yield N-(5'-phosphoribosyl)-anthranilate (PRA). The sequence is that of Anthranilate phosphoribosyltransferase from Francisella tularensis subsp. mediasiatica (strain FSC147).